Consider the following 294-residue polypeptide: Survival motor neuron protein (294 aa).

A compositionally biased stretch (gly residues) spans 1-12 (MAMSSGGSGGGV). The interval 1-32 (MAMSSGGSGGGVPEQEDSVLFRRGTGQSDDSD) is disordered. Alanine 2 carries the post-translational modification N-acetylalanine. Phosphoserine; by PKA occurs at positions 4, 5, and 8. A P1 (binding site for GEMIN2) region spans residues 13–44 (PEQEDSVLFRRGTGQSDDSDIWDDTALIKAYD). At threonine 25 the chain carries Phosphothreonine. Phosphoserine occurs at positions 28 and 31. Residue lysine 51 forms a Glycyl lysine isopeptide (Lys-Gly) (interchain with G-Cter in SUMO2) linkage. The tract at residues 58 to 88 (DICETSGKPKTTPKRKPAKKNKSQKKNTAAP) is disordered. Residues 68 to 82 (TTPKRKPAKKNKSQK) show a composition bias toward basic residues. Threonine 69 bears the Phosphothreonine mark. A Phosphothreonine; by PKA modification is found at threonine 85. The region spanning 91 to 151 (QWKVGDKCSA…LSPISEVANN (61 aa)) is the Tudor domain. A required for interaction with RPP20/POP7 region spans residues 97–209 (KCSAIWSEDG…MPGPRLGPGK (113 aa)). Over residues 156–166 (AQENENESQVS) the composition is skewed to low complexity. A disordered region spans residues 156-222 (AQENENESQV…KFNGPPPPPP (67 aa)). Position 187 is a phosphoserine; by PKA (serine 187). A compositionally biased stretch (pro residues) spans 194–204 (LPPPPPMPGPR). Residue lysine 209 forms a Glycyl lysine isopeptide (Lys-Gly) (interchain with G-Cter in SUMO2) linkage. The interval 240–267 (PPIIPPPPPICPDSLDDADALGSMLISW) is P2 (binding site for SM B). The required for interaction with SYNCRIP stretch occupies residues 279 to 294 (GFRQNQKEGRCSHSLN).

It belongs to the SMN family. In terms of assembly, homooligomer; may form higher order homooligomers in the dimer to octamer range. Part of the core SMN complex that contains SMN1, GEMIN2/SIP1, DDX20/GEMIN3, GEMIN4, GEMIN5, GEMIN6, GEMIN7, GEMIN8 and STRAP/UNRIP. Part of the SMN-Sm complex that contains SMN1, GEMIN2/SIP1, DDX20/GEMIN3, GEMIN4, GEMIN5, GEMIN6, GEMIN7, GEMIN8, STRAP/UNRIP and the Sm proteins SNRPB, SNRPD1, SNRPD2, SNRPD3, SNRPE, SNRPF and SNRPG. Component of an import snRNP complex composed of KPNB1, RNUT1, SMN1 and ZNF259. Interacts with DDX20, FBL, NOLA1, RNUT1, SYNCRIP and with several spliceosomal snRNP core Sm proteins, including SNRPB, SNRPD1, SNRPD2, SNRPD3, SNRPE and ILF3. Interacts with GEMIN2; the interaction is direct. Interacts with GEMIN3; the interaction is direct. Interacts with GEMIN8; the interaction is direct. Interacts with SNRPB; the interaction is direct. Interacts (via Tudor domain) with SNRPD1 (via C-terminus); the interaction is direct. Interacts with SNRPD2; the interaction is direct. Interacts (via Tudor domain) with SNRPD3 (via C-terminus); the interaction is direct. Interacts with SNRPE; the interaction is direct. Interacts with OSTF1, LSM10, LSM11 and RPP20/POP7. Interacts (via C-terminal region) with ZPR1 (via C-terminal region). Interacts (via Tudor domain) with COIL. Interacts with SETX; recruits SETX to POLR2A. Interacts with POLR2A (via the C-terminal domain (CTD)). Interacts with PRMT5. Interacts with XRN2. Interacts (via C-terminus) with FMR1 (via C-terminus); the interaction is direct and occurs in a RNA-independent manner. Interacts (via Tudor domain) with SF3B2 ('Arg-508'-methylated form). Interacts with WRAP53/TCAB1. Interacts (via Tudor domain) with ELAVL4 in an RNA-independent manner; the interaction is required for localization of ELAVL4 to RNA granules. Interacts with FRG1.

The protein resides in the nucleus. Its subcellular location is the gem. The protein localises to the cajal body. It localises to the cytoplasm. It is found in the cytoplasmic granule. The protein resides in the perikaryon. Its subcellular location is the cell projection. The protein localises to the neuron projection. It localises to the axon. It is found in the myofibril. The protein resides in the sarcomere. Its subcellular location is the z line. Functionally, the SMN complex catalyzes the assembly of small nuclear ribonucleoproteins (snRNPs), the building blocks of the spliceosome, and thereby plays an important role in the splicing of cellular pre-mRNAs. Most spliceosomal snRNPs contain a common set of Sm proteins SNRPB, SNRPD1, SNRPD2, SNRPD3, SNRPE, SNRPF and SNRPG that assemble in a heptameric protein ring on the Sm site of the small nuclear RNA to form the core snRNP (Sm core). In the cytosol, the Sm proteins SNRPD1, SNRPD2, SNRPE, SNRPF and SNRPG are trapped in an inactive 6S pICln-Sm complex by the chaperone CLNS1A that controls the assembly of the core snRNP. To assemble core snRNPs, the SMN complex accepts the trapped 5Sm proteins from CLNS1A forming an intermediate. Binding of snRNA inside 5Sm ultimately triggers eviction of the SMN complex, thereby allowing binding of SNRPD3 and SNRPB to complete assembly of the core snRNP. Within the SMN complex, SMN1 acts as a structural backbone and together with GEMIN2 it gathers the Sm complex subunits. Ensures the correct splicing of U12 intron-containing genes that may be important for normal motor and proprioceptive neurons development. Also required for resolving RNA-DNA hybrids created by RNA polymerase II, that form R-loop in transcription terminal regions, an important step in proper transcription termination. May also play a role in the metabolism of small nucleolar ribonucleoprotein (snoRNPs). This Macaca fascicularis (Crab-eating macaque) protein is Survival motor neuron protein (SMN1).